The primary structure comprises 458 residues: Cysteine protease ATG4C (458 aa).

Position 1 is an N-acetylmethionine (Met1). The active-site Nucleophile is Cys111. Residues Asp345 and His347 contribute to the active site. Residue Ser451 is modified to Phosphoserine. Thr452 carries the phosphothreonine modification.

Belongs to the peptidase C54 family.

The protein resides in the cytoplasm. The catalysed reaction is [protein]-C-terminal L-amino acid-glycyl-phosphatidylethanolamide + H2O = [protein]-C-terminal L-amino acid-glycine + a 1,2-diacyl-sn-glycero-3-phosphoethanolamine. With respect to regulation, inhibited by N-ethylmaleimide. Cysteine protease that plays a key role in autophagy by mediating both proteolytic activation and delipidation of ATG8 family proteins. The protease activity is required for proteolytic activation of ATG8 family proteins: cleaves the C-terminal amino acid of ATG8 proteins MAP1LC3 and GABARAPL2, to reveal a C-terminal glycine. Exposure of the glycine at the C-terminus is essential for ATG8 proteins conjugation to phosphatidylethanolamine (PE) and insertion to membranes, which is necessary for autophagy. In addition to the protease activity, also mediates delipidation of ATG8 family proteins. Catalyzes delipidation of PE-conjugated forms of ATG8 proteins during macroautophagy. Compared to ATG4B, the major protein for proteolytic activation of ATG8 proteins, shows weaker ability to cleave the C-terminal amino acid of ATG8 proteins, while it displays stronger delipidation activity. In contrast to other members of the family, weakly or not involved in phagophore growth during mitophagy. This is Cysteine protease ATG4C from Mus musculus (Mouse).